We begin with the raw amino-acid sequence, 468 residues long: 3-isopropylmalate dehydratase large subunit (468 aa).

[4Fe-4S] cluster-binding residues include Cys-347, Cys-407, and Cys-410.

It belongs to the aconitase/IPM isomerase family. LeuC type 1 subfamily. In terms of assembly, heterodimer of LeuC and LeuD. [4Fe-4S] cluster serves as cofactor.

The enzyme catalyses (2R,3S)-3-isopropylmalate = (2S)-2-isopropylmalate. It functions in the pathway amino-acid biosynthesis; L-leucine biosynthesis; L-leucine from 3-methyl-2-oxobutanoate: step 2/4. Its function is as follows. Catalyzes the isomerization between 2-isopropylmalate and 3-isopropylmalate, via the formation of 2-isopropylmaleate. This is 3-isopropylmalate dehydratase large subunit from Synechococcus sp. (strain CC9311).